A 381-amino-acid polypeptide reads, in one-letter code: 2-epi-5-epi-valiolone synthase (381 aa).

Residues D50, 81 to 84, 114 to 118, 138 to 139, K151, K160, and 178 to 181 each bind NAD(+); these read EEAK, GIVLD, TS, and FLDT. K151 is a catalytic residue. A divalent metal cation contacts are provided by E193, H264, and H280.

The protein belongs to the sugar phosphate cyclases superfamily. EEVS family. The cofactor is NAD(+). It depends on Co(2+) as a cofactor.

It catalyses the reaction D-sedoheptulose 7-phosphate = 2-epi-5-epi-valiolone + phosphate. The protein operates within antibiotic biosynthesis. Its function is as follows. Catalyzes the cyclization of D-sedoheptulose 7-phosphate to 2-epi-5-epi-valiolone. Involved in cetoniacytone A biosynthesis. The polypeptide is 2-epi-5-epi-valiolone synthase (Actinomyces sp).